Consider the following 261-residue polypeptide: Kynurenine formamidase (261 aa).

At Ser-9 the chain carries Phosphoserine. The HGGXW signature appears at 36 to 40 (HGGAW). The active-site Nucleophile is Ser-110. Active-site residues include Asp-211 and His-243.

It belongs to the kynurenine formamidase family. As to quaternary structure, homodimer.

The enzyme catalyses N-formyl-L-kynurenine + H2O = L-kynurenine + formate + H(+). Its pathway is amino-acid degradation; L-tryptophan degradation via kynurenine pathway; L-kynurenine from L-tryptophan: step 2/2. In terms of biological role, catalyzes the hydrolysis of N-formyl-L-kynurenine to L-kynurenine, the second step in the kynurenine pathway of tryptophan degradation. Kynurenine may be further oxidized to nicotinic acid, NAD(H) and NADP(H). Required for elimination of toxic metabolites. This is Kynurenine formamidase from Saccharomyces cerevisiae (strain ATCC 204508 / S288c) (Baker's yeast).